The chain runs to 398 residues: Phosphoglycerate kinase (398 aa).

Residues 21–23, R36, 59–62, R119, and R157 contribute to the substrate site; these read DFN and HLGR. Residues K208, G296, E327, and 354-357 contribute to the ATP site; that span reads GGDS.

Belongs to the phosphoglycerate kinase family. In terms of assembly, monomer.

The protein resides in the cytoplasm. The catalysed reaction is (2R)-3-phosphoglycerate + ATP = (2R)-3-phospho-glyceroyl phosphate + ADP. It functions in the pathway carbohydrate degradation; glycolysis; pyruvate from D-glyceraldehyde 3-phosphate: step 2/5. The chain is Phosphoglycerate kinase from Lactococcus lactis subsp. cremoris (strain SK11).